The following is a 294-amino-acid chain: Small ribosomal subunit protein uS2 (294 aa).

The segment covering S256–E274 has biased composition (basic and acidic residues). The interval S256–E294 is disordered. The segment covering I280 to E294 has biased composition (polar residues).

This sequence belongs to the universal ribosomal protein uS2 family.

This Leptospira interrogans serogroup Icterohaemorrhagiae serovar Lai (strain 56601) protein is Small ribosomal subunit protein uS2.